The sequence spans 342 residues: Holliday junction branch migration complex subunit RuvB (342 aa).

The tract at residues 2–181 (TDNPLLSSAS…FGIPVRLQFY (180 aa)) is large ATPase domain (RuvB-L). Residues L20, R21, G62, K65, T66, T67, R171, Y181, and R218 each coordinate ATP. T66 serves as a coordination point for Mg(2+). The tract at residues 182–252 (SVEELERVVA…IADNALTRLE (71 aa)) is small ATPAse domain (RuvB-S). A head domain (RuvB-H) region spans residues 255 to 342 (KIGLDLQDRR…QMPGLFGPDE (88 aa)). Positions 291, 310, and 315 each coordinate DNA.

Belongs to the RuvB family. Homohexamer. Forms an RuvA(8)-RuvB(12)-Holliday junction (HJ) complex. HJ DNA is sandwiched between 2 RuvA tetramers; dsDNA enters through RuvA and exits via RuvB. An RuvB hexamer assembles on each DNA strand where it exits the tetramer. Each RuvB hexamer is contacted by two RuvA subunits (via domain III) on 2 adjacent RuvB subunits; this complex drives branch migration. In the full resolvosome a probable DNA-RuvA(4)-RuvB(12)-RuvC(2) complex forms which resolves the HJ.

It is found in the cytoplasm. It catalyses the reaction ATP + H2O = ADP + phosphate + H(+). Its function is as follows. The RuvA-RuvB-RuvC complex processes Holliday junction (HJ) DNA during genetic recombination and DNA repair, while the RuvA-RuvB complex plays an important role in the rescue of blocked DNA replication forks via replication fork reversal (RFR). RuvA specifically binds to HJ cruciform DNA, conferring on it an open structure. The RuvB hexamer acts as an ATP-dependent pump, pulling dsDNA into and through the RuvAB complex. RuvB forms 2 homohexamers on either side of HJ DNA bound by 1 or 2 RuvA tetramers; 4 subunits per hexamer contact DNA at a time. Coordinated motions by a converter formed by DNA-disengaged RuvB subunits stimulates ATP hydrolysis and nucleotide exchange. Immobilization of the converter enables RuvB to convert the ATP-contained energy into a lever motion, pulling 2 nucleotides of DNA out of the RuvA tetramer per ATP hydrolyzed, thus driving DNA branch migration. The RuvB motors rotate together with the DNA substrate, which together with the progressing nucleotide cycle form the mechanistic basis for DNA recombination by continuous HJ branch migration. Branch migration allows RuvC to scan DNA until it finds its consensus sequence, where it cleaves and resolves cruciform DNA. This Novosphingobium aromaticivorans (strain ATCC 700278 / DSM 12444 / CCUG 56034 / CIP 105152 / NBRC 16084 / F199) protein is Holliday junction branch migration complex subunit RuvB.